The sequence spans 355 residues: UDP-N-acetylglucosamine--N-acetylmuramyl-(pentapeptide) pyrophosphoryl-undecaprenol N-acetylglucosamine transferase (355 aa).

UDP-N-acetyl-alpha-D-glucosamine contacts are provided by residues 15 to 17 (TGG), Asn-127, Arg-163, Ser-191, Ile-244, 263 to 268 (ALTVSE), and Gln-288.

This sequence belongs to the glycosyltransferase 28 family. MurG subfamily.

Its subcellular location is the cell inner membrane. It carries out the reaction di-trans,octa-cis-undecaprenyl diphospho-N-acetyl-alpha-D-muramoyl-L-alanyl-D-glutamyl-meso-2,6-diaminopimeloyl-D-alanyl-D-alanine + UDP-N-acetyl-alpha-D-glucosamine = di-trans,octa-cis-undecaprenyl diphospho-[N-acetyl-alpha-D-glucosaminyl-(1-&gt;4)]-N-acetyl-alpha-D-muramoyl-L-alanyl-D-glutamyl-meso-2,6-diaminopimeloyl-D-alanyl-D-alanine + UDP + H(+). Its pathway is cell wall biogenesis; peptidoglycan biosynthesis. In terms of biological role, cell wall formation. Catalyzes the transfer of a GlcNAc subunit on undecaprenyl-pyrophosphoryl-MurNAc-pentapeptide (lipid intermediate I) to form undecaprenyl-pyrophosphoryl-MurNAc-(pentapeptide)GlcNAc (lipid intermediate II). This chain is UDP-N-acetylglucosamine--N-acetylmuramyl-(pentapeptide) pyrophosphoryl-undecaprenol N-acetylglucosamine transferase, found in Escherichia coli (strain 55989 / EAEC).